We begin with the raw amino-acid sequence, 213 residues long: Glutathione S-transferase DHAR1, mitochondrial (213 aa).

The glutathione site is built by K8 and D19. Residues K8 and D19 each contribute to the L-ascorbate site. The region spanning 10–83 is the GST N-terminal domain; it reads AVGAPDHLGD…DVIVGILEEK (74 aa). The active-site Nucleophile is the C20. C20 is subject to S-glutathionyl cysteine. Positions 20–25 match the Glutathione-binding motif; it reads CPFSQR. Glutathione is bound by residues K47, V60, and S73. The region spanning 84 to 213 is the GST C-terminal domain; that stretch reads YPDPPLKTPA…ISGWAPKVNP (130 aa). The short motif at 133–137 is the Copper-binding element; it reads HLKSH. 2 residues coordinate glutathione: H160 and W207. K210 is a binding site for L-ascorbate.

Belongs to the GST superfamily. DHAR family. As to quaternary structure, monomer. Interacts with copper (Cu). Spontaneous S-glutathionylation in the presence of oxidized glutathione (GSSG). Expressed at least in roots and leaves.

The protein resides in the mitochondrion. Its subcellular location is the cytoplasm. It localises to the cytosol. It is found in the peroxisome. The protein localises to the membrane. The enzyme catalyses RX + glutathione = an S-substituted glutathione + a halide anion + H(+). It catalyses the reaction L-dehydroascorbate + 2 glutathione = glutathione disulfide + L-ascorbate. Functionally, displays a dual function. As a soluble protein, exhibits glutathione-dependent thiol transferase and dehydroascorbate (DHA) reductase activities. Key component of the ascorbate recycling system. Involved in the redox homeostasis, especially in scavenging of ROS under oxidative stresses, subsequently to biotic or abiotic inducers. As a peripheral membrane protein, could also function as voltage-gated ion channel. The polypeptide is Glutathione S-transferase DHAR1, mitochondrial (Arabidopsis thaliana (Mouse-ear cress)).